The following is a 236-amino-acid chain: Ubiquinone biosynthesis O-methyltransferase (236 aa).

S-adenosyl-L-methionine contacts are provided by arginine 39, glycine 59, aspartate 80, and methionine 124.

Belongs to the methyltransferase superfamily. UbiG/COQ3 family.

The catalysed reaction is a 3-demethylubiquinol + S-adenosyl-L-methionine = a ubiquinol + S-adenosyl-L-homocysteine + H(+). It catalyses the reaction a 3-(all-trans-polyprenyl)benzene-1,2-diol + S-adenosyl-L-methionine = a 2-methoxy-6-(all-trans-polyprenyl)phenol + S-adenosyl-L-homocysteine + H(+). Its pathway is cofactor biosynthesis; ubiquinone biosynthesis. In terms of biological role, O-methyltransferase that catalyzes the 2 O-methylation steps in the ubiquinone biosynthetic pathway. This chain is Ubiquinone biosynthesis O-methyltransferase, found in Shewanella sp. (strain MR-4).